Reading from the N-terminus, the 90-residue chain is uncharacterized protein (90 aa).

This sequence to E.coli RlpA.

This is an uncharacterized protein from Synechocystis sp. (strain ATCC 27184 / PCC 6803 / Kazusa).